The chain runs to 101 residues: Protein SSXA1 (101 aa).

The 65-residue stretch at 19 to 83 (ETCQAFEDIS…ERVTKSVLSD (65 aa)) folds into the KRAB-related domain. The disordered stretch occupies residues 73-101 (KERVTKSVLSDSDEVSSHESQDKRKNPVV). The segment covering 87 to 101 (VSSHESQDKRKNPVV) has biased composition (basic and acidic residues).

It belongs to the SSX family. Specifically expressed in testis (at protein level). Not detected in other tissues tested (at protein level).

Its subcellular location is the nucleus. Functionally, could act as a modulator of transcription. This is Protein SSXA1 from Mus musculus (Mouse).